Consider the following 190-residue polypeptide: Large ribosomal subunit protein uL6 (190 aa).

The protein belongs to the universal ribosomal protein uL6 family.

The chain is Large ribosomal subunit protein uL6 (RpL9) from Drosophila melanogaster (Fruit fly).